The following is a 419-amino-acid chain: UDP-N-acetylglucosamine 1-carboxyvinyltransferase (419 aa).

A phosphoenolpyruvate-binding site is contributed by 22–23 (KN). Arginine 91 is a UDP-N-acetyl-alpha-D-glucosamine binding site. The active-site Proton donor is cysteine 115. 2-(S-cysteinyl)pyruvic acid O-phosphothioketal is present on cysteine 115. UDP-N-acetyl-alpha-D-glucosamine-binding positions include 120-124 (RPVDL), 160-163 (KVSV), aspartate 305, and valine 327.

It belongs to the EPSP synthase family. MurA subfamily.

The protein localises to the cytoplasm. The enzyme catalyses phosphoenolpyruvate + UDP-N-acetyl-alpha-D-glucosamine = UDP-N-acetyl-3-O-(1-carboxyvinyl)-alpha-D-glucosamine + phosphate. The protein operates within cell wall biogenesis; peptidoglycan biosynthesis. Its function is as follows. Cell wall formation. Adds enolpyruvyl to UDP-N-acetylglucosamine. This Salmonella arizonae (strain ATCC BAA-731 / CDC346-86 / RSK2980) protein is UDP-N-acetylglucosamine 1-carboxyvinyltransferase.